The following is a 225-amino-acid chain: Phosphoglycolate phosphatase (225 aa).

The active-site Nucleophile is the aspartate 11. Residues aspartate 11 and aspartate 13 each coordinate Mg(2+). Lysine 153 contributes to the substrate binding site. Residues aspartate 176 and aspartate 180 each coordinate Mg(2+).

It belongs to the archaeal SPP-like hydrolase family. Mg(2+) serves as cofactor.

The enzyme catalyses 2-phosphoglycolate + H2O = glycolate + phosphate. Catalyzes the dephosphorylation of 2-phosphoglycolate. The polypeptide is Phosphoglycolate phosphatase (Halobacterium salinarum (strain ATCC 29341 / DSM 671 / R1)).